An 84-amino-acid polypeptide reads, in one-letter code: Small ribosomal subunit protein bS16 (84 aa).

It belongs to the bacterial ribosomal protein bS16 family.

The protein is Small ribosomal subunit protein bS16 of Thioalkalivibrio sulfidiphilus (strain HL-EbGR7).